The sequence spans 310 residues: Ribosomal RNA small subunit methyltransferase H (310 aa).

S-adenosyl-L-methionine-binding positions include 32–34 (GGH), Asp-52, Phe-79, Asp-100, and Gln-107.

Belongs to the methyltransferase superfamily. RsmH family.

Its subcellular location is the cytoplasm. The catalysed reaction is cytidine(1402) in 16S rRNA + S-adenosyl-L-methionine = N(4)-methylcytidine(1402) in 16S rRNA + S-adenosyl-L-homocysteine + H(+). Its function is as follows. Specifically methylates the N4 position of cytidine in position 1402 (C1402) of 16S rRNA. This chain is Ribosomal RNA small subunit methyltransferase H, found in Bacillus cereus (strain AH187).